A 325-amino-acid polypeptide reads, in one-letter code: ATP phosphoribosyltransferase (325 aa).

This sequence belongs to the ATP phosphoribosyltransferase family. Long subfamily. Mg(2+) is required as a cofactor.

It localises to the cytoplasm. It carries out the reaction 1-(5-phospho-beta-D-ribosyl)-ATP + diphosphate = 5-phospho-alpha-D-ribose 1-diphosphate + ATP. Its pathway is amino-acid biosynthesis; L-histidine biosynthesis; L-histidine from 5-phospho-alpha-D-ribose 1-diphosphate: step 1/9. Feedback inhibited by histidine. Functionally, catalyzes the condensation of ATP and 5-phosphoribose 1-diphosphate to form N'-(5'-phosphoribosyl)-ATP (PR-ATP). Has a crucial role in the pathway because the rate of histidine biosynthesis seems to be controlled primarily by regulation of HisG enzymatic activity. The polypeptide is ATP phosphoribosyltransferase (Bradyrhizobium diazoefficiens (strain JCM 10833 / BCRC 13528 / IAM 13628 / NBRC 14792 / USDA 110)).